The chain runs to 408 residues: Triose phosphate/phosphate translocator, chloroplastic (408 aa).

A chloroplast-targeting transit peptide spans 1 to 82 (MESRVLSSGA…VKRDVLKPCT (82 aa)). At 83–102 (ATASDSAGDAAPVGFFAKYP) the chain is on the chloroplast intermembrane side. Residues 103-123 (FLVTGFFFFMWYFLNVIFNIL) form a helical membrane-spanning segment. The Lumenal segment spans residues 124-135 (NKKIYNYFPYPY). The chain crosses the membrane as a helical span at residues 136 to 156 (FVSAIHLAVGVVYCLGGWAVG). The Chloroplast intermembrane segment spans residues 157–213 (LPKRAPMDSNLLKLLIPVAFCHALGHVTSNVSFAAVAVSFTHTIKSLEPFFNAAASQ). The chain crosses the membrane as a helical span at residues 214 to 234 (FILGQSIPITLWLSLAPVVIG). The Lumenal segment spans residues 235-278 (VSMASLTELSFNWLGFISAMISNISFTYRSIYSKKAMTDMDSTN). A helical membrane pass occupies residues 279 to 298 (LYAYISIISLLFCIPPAIIL). Topologically, residues 299–376 (EGPQLLKHGF…IVFGNKISTQ (78 aa)) are chloroplast intermembrane. The helical transmembrane segment at 377 to 397 (TAIGTSIAIAGVAVYSLIKAK) threads the bilayer. Over 398–408 (IEEEKRGLKSA) the chain is Lumenal.

It belongs to the TPT transporter family. TPT (TC 2.A.7.9) subfamily. Homodimer.

Its subcellular location is the plastid. The protein resides in the chloroplast membrane. In terms of biological role, mediates the export of fixed carbons from the chloroplasts into the cytosol in the form of triose phosphates. This chain is Triose phosphate/phosphate translocator, chloroplastic (TPT), found in Flaveria pringlei.